The primary structure comprises 383 residues: BRISC and BRCA1-A complex member 2 (383 aa).

M1 carries the N-acetylmethionine modification. S2 is subject to Phosphoserine. UEV-like stretches follow at residues 30-147 (DATN…TLLE) and 275-364 (IAAF…RAKA).

This sequence belongs to the BABAM2 family. As to quaternary structure, component of the ARISC complex, at least composed of UIMC1/RAP80, ABRAXAS1, BRCC3/BRCC36, BABAM2 and BABAM1/NBA1. Component of the BRCA1-A complex, at least composed of BRCA1, BARD1, UIMC1/RAP80, ABRAXAS1, BRCC3/BRCC36, BABAM2 and BABAM1/NBA1. In the BRCA1-A complex, interacts directly with ABRAXAS1, BRCC3/BRCC36 and BABAM1/NBA1. Binds polyubiquitin. Component of the BRISC complex, at least composed of ABRAXAS2, BRCC3/BRCC36, BABAM2 and BABAM1/NBA1. Identified in a complex with SHMT2 and the other subunits of the BRISC complex. Component of the BRCA1/BRCA2 containing complex (BRCC), which also contains BRCA1, BRCA2, BARD1, BRCC3/BRCC36 and RAD51. BRCC is a ubiquitin E3 ligase complex that enhances cellular survival following DNA damage. May interact with FAS and TNFRSF1A.

Its subcellular location is the cytoplasm. The protein localises to the nucleus. Component of the BRCA1-A complex, a complex that specifically recognizes 'Lys-63'-linked ubiquitinated histones H2A and H2AX at DNA lesions sites, leading to target the BRCA1-BARD1 heterodimer to sites of DNA damage at double-strand breaks (DSBs). The BRCA1-A complex also possesses deubiquitinase activity that specifically removes 'Lys-63'-linked ubiquitin on histones H2A and H2AX. In the BRCA1-A complex, it acts as an adapter that bridges the interaction between BABAM1/NBA1 and the rest of the complex, thereby being required for the complex integrity and modulating the E3 ubiquitin ligase activity of the BRCA1-BARD1 heterodimer. Component of the BRISC complex, a multiprotein complex that specifically cleaves 'Lys-63'-linked ubiquitin in various substrates. Within the BRISC complex, acts as an adapter that bridges the interaction between BABAM1/NBA1 and the rest of the complex, thereby being required for the complex integrity. The BRISC complex is required for normal mitotic spindle assembly and microtubule attachment to kinetochores via its role in deubiquitinating NUMA1. The BRISC complex plays a role in interferon signaling via its role in the deubiquitination of the interferon receptor IFNAR1; deubiquitination increases IFNAR1 activity by enhancing its stability and cell surface expression. Down-regulates the response to bacterial lipopolysaccharide (LPS) via its role in IFNAR1 deubiquitination. May play a role in homeostasis or cellular differentiation in cells of neural, epithelial and germline origins. May also act as a death receptor-associated anti-apoptotic protein, which inhibits the mitochondrial apoptotic pathway. May regulate TNF-alpha signaling through its interactions with TNFRSF1A; however these effects may be indirect. This is BRISC and BRCA1-A complex member 2 (BABAM2) from Pongo abelii (Sumatran orangutan).